A 140-amino-acid polypeptide reads, in one-letter code: ATP synthase epsilon chain (140 aa).

It belongs to the ATPase epsilon chain family. As to quaternary structure, F-type ATPases have 2 components, CF(1) - the catalytic core - and CF(0) - the membrane proton channel. CF(1) has five subunits: alpha(3), beta(3), gamma(1), delta(1), epsilon(1). CF(0) has three main subunits: a, b and c.

The protein resides in the cell inner membrane. In terms of biological role, produces ATP from ADP in the presence of a proton gradient across the membrane. This Xanthomonas oryzae pv. oryzae (strain PXO99A) protein is ATP synthase epsilon chain.